The primary structure comprises 332 residues: Phosphate acyltransferase (332 aa).

The protein belongs to the PlsX family. Homodimer. Probably interacts with PlsY.

The protein resides in the cytoplasm. The enzyme catalyses a fatty acyl-[ACP] + phosphate = an acyl phosphate + holo-[ACP]. It participates in lipid metabolism; phospholipid metabolism. In terms of biological role, catalyzes the reversible formation of acyl-phosphate (acyl-PO(4)) from acyl-[acyl-carrier-protein] (acyl-ACP). This enzyme utilizes acyl-ACP as fatty acyl donor, but not acyl-CoA. The chain is Phosphate acyltransferase from Caldanaerobacter subterraneus subsp. tengcongensis (strain DSM 15242 / JCM 11007 / NBRC 100824 / MB4) (Thermoanaerobacter tengcongensis).